We begin with the raw amino-acid sequence, 90 residues long: Molybdopterin synthase sulfur carrier subunit (90 aa).

The residue at position 90 (glycine 90) is a 1-thioglycine; alternate. At glycine 90 the chain carries Glycyl adenylate; alternate.

It belongs to the MoaD family. MOCS2A subfamily. In terms of assembly, heterotetramer; composed of 2 small (Mocs2A) and 2 large (Mocs2B) subunits. Post-translationally, C-terminal thiocarboxylation occurs in 2 steps, it is first acyl-adenylated (-COAMP) via the hesA/moeB/thiF part of MOCS3, then thiocarboxylated (-COSH) via the rhodanese domain of MOCS3.

The protein resides in the cytoplasm. It functions in the pathway cofactor biosynthesis; molybdopterin biosynthesis. Its function is as follows. Acts as a sulfur carrier required for molybdopterin biosynthesis. Component of the molybdopterin synthase complex that catalyzes the conversion of precursor Z into molybdopterin by mediating the incorporation of 2 sulfur atoms into precursor Z to generate a dithiolene group. In the complex, serves as sulfur donor by being thiocarboxylated (-COSH) at its C-terminus by MOCS3. After interaction with Mocs2B, the sulfur is then transferred to precursor Z to form molybdopterin. The chain is Molybdopterin synthase sulfur carrier subunit from Drosophila sechellia (Fruit fly).